The chain runs to 342 residues: Methylthioribose-1-phosphate isomerase (342 aa).

Substrate is bound by residues 44–46, arginine 87, and glutamine 194; that span reads RGA. Aspartate 235 (proton donor) is an active-site residue. Position 245–246 (245–246) interacts with substrate; it reads NK.

It belongs to the eIF-2B alpha/beta/delta subunits family. MtnA subfamily.

It carries out the reaction 5-(methylsulfanyl)-alpha-D-ribose 1-phosphate = 5-(methylsulfanyl)-D-ribulose 1-phosphate. It functions in the pathway amino-acid biosynthesis; L-methionine biosynthesis via salvage pathway; L-methionine from S-methyl-5-thio-alpha-D-ribose 1-phosphate: step 1/6. Catalyzes the interconversion of methylthioribose-1-phosphate (MTR-1-P) into methylthioribulose-1-phosphate (MTRu-1-P). The polypeptide is Methylthioribose-1-phosphate isomerase (Acetivibrio thermocellus (strain ATCC 27405 / DSM 1237 / JCM 9322 / NBRC 103400 / NCIMB 10682 / NRRL B-4536 / VPI 7372) (Clostridium thermocellum)).